The chain runs to 179 residues: Dual-action ribosomal maturation protein DarP (179 aa).

The protein belongs to the DarP family.

The protein resides in the cytoplasm. Its function is as follows. Member of a network of 50S ribosomal subunit biogenesis factors which assembles along the 30S-50S interface, preventing incorrect 23S rRNA structures from forming. Promotes peptidyl transferase center (PTC) maturation. This chain is Dual-action ribosomal maturation protein DarP, found in Photorhabdus laumondii subsp. laumondii (strain DSM 15139 / CIP 105565 / TT01) (Photorhabdus luminescens subsp. laumondii).